The sequence spans 696 residues: UvrABC system protein C (696 aa).

The 80-residue stretch at 16 to 95 folds into the GIY-YIG domain; the sequence is TEPGVYKFRD…IKRFDPRFNV (80 aa). A UVR domain is found at 208-243; sequence DKVTRKLNADMMAAAEELDFERAARLRDDLEAIDKV.

It belongs to the UvrC family. As to quaternary structure, interacts with UvrB in an incision complex.

Its subcellular location is the cytoplasm. Functionally, the UvrABC repair system catalyzes the recognition and processing of DNA lesions. UvrC both incises the 5' and 3' sides of the lesion. The N-terminal half is responsible for the 3' incision and the C-terminal half is responsible for the 5' incision. This is UvrABC system protein C from Corynebacterium glutamicum (strain ATCC 13032 / DSM 20300 / JCM 1318 / BCRC 11384 / CCUG 27702 / LMG 3730 / NBRC 12168 / NCIMB 10025 / NRRL B-2784 / 534).